The sequence spans 208 residues: MSDTVVASAAVQAPAKTVKSPKAAKTTKVPKAKKPVAHPPYINMVTAAINGLKERKGSSKIAILKYITKNYNVGDQIIKINARLRDTLNKGVVSKALVQSVGTGASGRFRVTEKKAAAAKKPVAKKAATGEKKAKKPVAQKAATGEKKAKKTTATKTKKTADKVKKVKSPKKIAKPTAKKVAKSPAKKSAPKKAAAAKPAKKAVAPKT.

Position 2 is an N-acetylserine (S2). The H15 domain occupies A37–E113. The disordered stretch occupies residues E113–T208. 2 stretches are compositionally biased toward basic residues: residues K148–K158 and K165–P191. The segment covering K192 to T208 has biased composition (low complexity).

This sequence belongs to the histone H1/H5 family.

The protein resides in the nucleus. It localises to the chromosome. In terms of biological role, histones H1 are necessary for the condensation of nucleosome chains into higher-order structures. This chain is Histone H1.3 (hil-3), found in Caenorhabditis elegans.